A 122-amino-acid polypeptide reads, in one-letter code: Beta-2-microglobulin (122 aa).

An N-terminal signal peptide occupies residues 1–22; it reads MMARIFILALLGQLCFLPYLDA. Residues 27–115 enclose the Ig-like C1-type domain; that stretch reads PKVQVYSRHP…HLTLQEPKVV (89 aa). Cys-47 and Cys-102 form a disulfide bridge.

It belongs to the beta-2-microglobulin family. In terms of assembly, heterodimer of an alpha chain and a beta chain. Beta-2-microglobulin is the beta-chain of major histocompatibility complex class I molecules.

It is found in the secreted. In terms of biological role, component of the class I major histocompatibility complex (MHC). Involved in the presentation of peptide antigens to the immune system. In Trichosurus vulpecula (Brush-tailed possum), this protein is Beta-2-microglobulin (B2M).